We begin with the raw amino-acid sequence, 368 residues long: tRNA-specific 2-thiouridylase MnmA (368 aa).

ATP is bound by residues 12-19 and Met-38; that span reads GMSGGVDS. The segment at 98–100 is interaction with target base in tRNA; sequence NPD. The active-site Nucleophile is Cys-103. An intrachain disulfide couples Cys-103 to Cys-200. ATP is bound at residue Gly-128. Positions 150-152 are interaction with tRNA; it reads KDQ. Cys-200 functions as the Cysteine persulfide intermediate in the catalytic mechanism. The interaction with tRNA stretch occupies residues 313–314; the sequence is RY.

This sequence belongs to the MnmA/TRMU family. As to quaternary structure, interacts with TusE.

The protein resides in the cytoplasm. The catalysed reaction is S-sulfanyl-L-cysteinyl-[protein] + uridine(34) in tRNA + AH2 + ATP = 2-thiouridine(34) in tRNA + L-cysteinyl-[protein] + A + AMP + diphosphate + H(+). Its function is as follows. Catalyzes the 2-thiolation of uridine at the wobble position (U34) of tRNA(Lys), tRNA(Glu) and tRNA(Gln), leading to the formation of s(2)U34, the first step of tRNA-mnm(5)s(2)U34 synthesis. Sulfur is provided by IscS, via a sulfur-relay system. Binds ATP and its substrate tRNAs. The sequence is that of tRNA-specific 2-thiouridylase MnmA from Pectobacterium carotovorum subsp. carotovorum (strain PC1).